Consider the following 334-residue polypeptide: L-lactate dehydrogenase B chain (334 aa).

A2 bears the N-acetylalanine mark. K7 carries the N6-acetyllysine modification. S44 is modified (phosphoserine). Residues 53–58 (DVLEDK) and R100 each bind NAD(+). N6-acetyllysine is present on K58. R107 serves as a coordination point for substrate. K119 is subject to N6-acetyllysine. N139 is an NAD(+) binding site. Residues N139 and R170 each contribute to the substrate site. Residue H194 is the Proton acceptor of the active site. The residue at position 240 (Y240) is a Phosphotyrosine. A substrate-binding site is contributed by T249. Residue K329 is modified to N6-acetyllysine.

Belongs to the LDH/MDH superfamily. LDH family. As to quaternary structure, homotetramer. Interacts with PTEN upstream reading frame protein MP31; the interaction leads to inhibition of mitochondrial lactate dehydrogenase activity, preventing conversion of lactate to pyruvate in mitochondria.

It localises to the cytoplasm. Its subcellular location is the mitochondrion inner membrane. It catalyses the reaction (S)-lactate + NAD(+) = pyruvate + NADH + H(+). It participates in fermentation; pyruvate fermentation to lactate; (S)-lactate from pyruvate: step 1/1. Functionally, interconverts simultaneously and stereospecifically pyruvate and lactate with concomitant interconversion of NADH and NAD(+). This chain is L-lactate dehydrogenase B chain (LDHB), found in Bos taurus (Bovine).